Reading from the N-terminus, the 549-residue chain is Rhodopsin kinase grk7a (549 aa).

The residue at position 33 (Ser-33) is a Phosphoserine. The RGS domain occupies 53-171 (FESLCEKQPI…QASPFFDKFL (119 aa)). The 264-residue stretch at 186-449 (FYEFRTLGKG…NDDPRKHEWF (264 aa)) folds into the Protein kinase domain. ATP contacts are provided by residues 192 to 200 (LGKGGFGEV) and Lys-215. Asp-311 serves as the catalytic Proton acceptor. The AGC-kinase C-terminal domain maps to 450–515 (KSINFARLEA…GAVSIAWQQE (66 aa)). The segment at 522-549 (FDELSDPNRKESSGGSDDDKKSGTCTLL) is disordered. Residues 527–543 (DPNRKESSGGSDDDKKS) show a composition bias toward basic and acidic residues. Residue Cys-546 is modified to Cysteine methyl ester. Cys-546 is lipidated: S-geranylgeranyl cysteine. The propeptide at 547–549 (TLL) is removed in mature form.

This sequence belongs to the protein kinase superfamily. AGC Ser/Thr protein kinase family. GPRK subfamily. Phosphorylation at Ser-33 is regulated by light and activated by cAMP.

The protein resides in the membrane. The enzyme catalyses L-threonyl-[rhodopsin] + ATP = O-phospho-L-threonyl-[rhodopsin] + ADP + H(+). The catalysed reaction is L-seryl-[rhodopsin] + ATP = O-phospho-L-seryl-[rhodopsin] + ADP + H(+). Its function is as follows. Retina-specific kinase involved in the shutoff of the photoresponse and adaptation to changing light conditions via cone opsin phosphorylation, including rhodopsin (RHO). In Danio rerio (Zebrafish), this protein is Rhodopsin kinase grk7a (grk7a).